The following is a 1385-amino-acid chain: Serine-aspartate repeat-containing protein D (1385 aa).

The first 35 residues, 1–35 (MLNRENKTAITRKGMVSNRLNKFSIRKYTVGTASI), serve as a signal peptide directing secretion. Positions 23–34 (FSIRKYTVGTAS) match the YSIRK-G/S signaling motif motif. The ligand binding A region stretch occupies residues 36 to 568 (LVGTTLIFGL…NNQSGGAGQE (533 aa)). Disordered regions lie at residues 54-162 (ESTN…DLLE) and 200-224 (ETLV…KSTA). Composition is skewed to polar residues over residues 62-71 (EATTSASDNQ) and 94-109 (EMVS…NGNK). Positions 130–145 (KSDEQASPKSTNEDLN) are enriched in basic and acidic residues. The segment covering 146–155 (TKQTISNQEG) has biased composition (polar residues). The span at 205–214 (NNSNSNNENN) shows a compositional bias: low complexity. CNA-B domains lie at 569 to 680 (VYKI…IYKP), 681 to 791 (KYNL…YKTP), 792 to 901 (KYNL…FYKP), 902 to 1012 (TYNL…YKTP), and 1013 to 1123 (KYSL…EEET). 3 disordered regions span residues 856-886 (FETP…TGVI), 972-992 (YTPT…GLTT), and 1077-1361 (FEKP…SNNA). 2 stretches are compositionally biased toward polar residues: residues 860–869 (SGYTPTQVGS) and 972–981 (YTPTSVTSGN). Positions 1081–1090 (TGLTQTGTNT) are enriched in low complexity. Composition is skewed to acidic residues over residues 1091–1101 (TEDDKDADGGE) and 1118–1324 (YYEE…DSDS). The LPXTG sorting signal motif lies at 1348 to 1352 (LPETG). At T1351 the chain carries Pentaglycyl murein peptidoglycan amidated threonine. The propeptide at 1352–1385 (GNENSGSNNATLFGGLFAALGSLLLFGRRKKQNK) is removed by sortase.

Belongs to the serine-aspartate repeat-containing protein (SDr) family. Interacts with host DSG1; this interaction increases S.aureus adherence to keratinocytes.

It is found in the secreted. It localises to the cell wall. Cell surface-associated calcium-binding protein which plays an important role in adhesion and pathogenesis. Mediates interactions with components of the extracellular matrix such as host DSG1 to promote bacterial adhesion to host cells. Contributes to the resistance to killing by innate immune components such as neutrophils present in blood and thus attenuates bacterial clearance. The protein is Serine-aspartate repeat-containing protein D (sdrD) of Staphylococcus aureus (strain Mu50 / ATCC 700699).